The following is a 117-amino-acid chain: Putative phosphotransferase enzyme IIB component MPN_268 (117 aa).

Residues 1–21 (MKVLLWIGYVLSFGLLYLYLV) form a helical membrane-spanning segment. The region spanning 42–117 (PFAVRDFIAA…QLKQQIENER (76 aa)) is the PTS EIIB type-1 domain.

It is found in the membrane. In terms of biological role, the phosphoenolpyruvate-dependent sugar phosphotransferase system (PTS), a major carbohydrate active -transport system, catalyzes the phosphorylation of incoming sugar substrates concomitant with their translocation across the cell membrane. The sequence is that of Putative phosphotransferase enzyme IIB component MPN_268 from Mycoplasma pneumoniae (strain ATCC 29342 / M129 / Subtype 1) (Mycoplasmoides pneumoniae).